The following is a 214-amino-acid chain: Clavatol biosynthesis cluster protein B (214 aa).

The signal sequence occupies residues M1 to A17. N-linked (GlcNAc...) asparagine glycosylation is found at N103 and N204.

Its pathway is secondary metabolite biosynthesis. Its function is as follows. Part of the cla gene cluster that produces clavatol and ortho-quinone methide. The clavatol biosynthesis cluster cla and the terrestric acid cluster tra are both involved in the production of peniphenones and penilactones. The non-reducing PKS claF is responsible for the formation of clavatol from successive condensations of 3 malonyl-CoA units, presumably with a simple acetyl-CoA starter unit, and 2 methylation steps. The esterase claE probably collaborates with claF by catalyzing the hydrolysis of ACP-bound acyl intermediates to free the ACP from stalled intermediates. The clavatol oxidase claD then converts clavatol to hydroxyclavatol. Spontaneous dehydration of hydroxyclavatol leads to the accumulation of the highly active ortho-quinone methide. On the other hand, the PKS-NRPS hybrid traA is involved in the formation of crustosic acid, with the help of traB and traD. The polyketide synthase module (PKS) of traA is responsible for the synthesis of the polyketide backbone via the condensation of an acetyl-CoA starter unit with 3 malonyl-CoA units. The downstream nonribosomal peptide synthetase (NRPS) module then amidates the carboxyl end of the polyketide with L-malic acid. Because traA lacks a designated enoylreductase (ER) domain, the required activity is provided the enoyl reductase traG. Crustosic acid undergoes decarboxylation and isomerization to the terrestric acid, catalyzed by the 2-oxoglutarate-dependent dioxygenase traH. Both acids are further converted to the 2 gamma-butyrolactones (R)-5-methyltetronic acid and (S)-5-carboxylmethyltetronic acid, with involvement of the cytochrome P450 monooxygenase claJ. Spontaneous addition of the methide to these gamma-butyrolactones leads to peniphenone D and penilactone D, which undergo again stereospecific attacking by methide to give penilactones A and B. The function of claB has not been investigated yet. The protein is Clavatol biosynthesis cluster protein B of Penicillium crustosum (Blue mold fungus).